We begin with the raw amino-acid sequence, 143 residues long: Large ribosomal subunit protein uL11 (143 aa).

The protein belongs to the universal ribosomal protein uL11 family. In terms of assembly, part of the ribosomal stalk of the 50S ribosomal subunit. Interacts with L10 and the large rRNA to form the base of the stalk. L10 forms an elongated spine to which L12 dimers bind in a sequential fashion forming a multimeric L10(L12)X complex. One or more lysine residues are methylated.

Functionally, forms part of the ribosomal stalk which helps the ribosome interact with GTP-bound translation factors. The polypeptide is Large ribosomal subunit protein uL11 (Borreliella burgdorferi (strain ATCC 35210 / DSM 4680 / CIP 102532 / B31) (Borrelia burgdorferi)).